We begin with the raw amino-acid sequence, 362 residues long: tRNA-specific 2-thiouridylase MnmA (362 aa).

Residues 9-16 (GMSGGVDS) and methionine 35 contribute to the ATP site. Positions 95-97 (NPD) are interaction with target base in tRNA. The active-site Nucleophile is the cysteine 100. Cysteine 100 and cysteine 196 form a disulfide bridge. Residue glycine 124 participates in ATP binding. Residues 146 to 148 (KDQ) are interaction with tRNA. The active-site Cysteine persulfide intermediate is cysteine 196. An interaction with tRNA region spans residues 308 to 309 (RY).

Belongs to the MnmA/TRMU family.

Its subcellular location is the cytoplasm. It carries out the reaction S-sulfanyl-L-cysteinyl-[protein] + uridine(34) in tRNA + AH2 + ATP = 2-thiouridine(34) in tRNA + L-cysteinyl-[protein] + A + AMP + diphosphate + H(+). Catalyzes the 2-thiolation of uridine at the wobble position (U34) of tRNA, leading to the formation of s(2)U34. The sequence is that of tRNA-specific 2-thiouridylase MnmA from Nitrosomonas europaea (strain ATCC 19718 / CIP 103999 / KCTC 2705 / NBRC 14298).